We begin with the raw amino-acid sequence, 348 residues long: Neuronal growth regulator 1 (348 aa).

The signal sequence occupies residues 1–31; the sequence is MVLLAQGACCSNQWLAAVLLSLCSCLPAGQS. Ig-like C2-type domains are found at residues 32–128, 133–215, and 219–307; these read VDFP…VHLT, PKIY…RVIV, and PTIQ…LPLN. Cysteines 54 and 112 form a disulfide. 2 N-linked (GlcNAc...) asparagine glycosylation sites follow: Asn67 and Asn149. Intrachain disulfides connect Cys154-Cys197 and Cys239-Cys291. Tyr181 carries the phosphotyrosine modification. N-linked (GlcNAc...) asparagine glycans are attached at residues Asn269, Asn280, Asn288, and Asn301. A lipid anchor (GPI-anchor amidated glycine) is attached at Gly318. A propeptide spans 319–348 (removed in mature form); sequence SACDLFSCWSLALTLSSVISIFYLKNAILQ.

This sequence belongs to the immunoglobulin superfamily. IgLON family. Expressed in brain.

Its subcellular location is the cell membrane. In terms of biological role, may be involved in cell-adhesion. May function as a trans-neural growth-promoting factor in regenerative axon sprouting in the mammalian brain. The protein is Neuronal growth regulator 1 (Negr1) of Mus musculus (Mouse).